Here is a 296-residue protein sequence, read N- to C-terminus: Glycine--tRNA ligase alpha subunit (296 aa).

This sequence belongs to the class-II aminoacyl-tRNA synthetase family. In terms of assembly, tetramer of two alpha and two beta subunits.

It is found in the cytoplasm. The enzyme catalyses tRNA(Gly) + glycine + ATP = glycyl-tRNA(Gly) + AMP + diphosphate. This is Glycine--tRNA ligase alpha subunit from Prochlorococcus marinus (strain SARG / CCMP1375 / SS120).